A 510-amino-acid chain; its full sequence is ATP synthase subunit alpha (510 aa).

169 to 176 contributes to the ATP binding site; that stretch reads GDRQTGKS.

Belongs to the ATPase alpha/beta chains family. As to quaternary structure, F-type ATPases have 2 components, CF(1) - the catalytic core - and CF(0) - the membrane proton channel. CF(1) has five subunits: alpha(3), beta(3), gamma(1), delta(1), epsilon(1). CF(0) has three main subunits: a(1), b(2) and c(9-12). The alpha and beta chains form an alternating ring which encloses part of the gamma chain. CF(1) is attached to CF(0) by a central stalk formed by the gamma and epsilon chains, while a peripheral stalk is formed by the delta and b chains.

It is found in the cell membrane. It carries out the reaction ATP + H2O + 4 H(+)(in) = ADP + phosphate + 5 H(+)(out). Functionally, produces ATP from ADP in the presence of a proton gradient across the membrane. The alpha chain is a regulatory subunit. The sequence is that of ATP synthase subunit alpha from Wigglesworthia glossinidia brevipalpis.